The sequence spans 780 residues: Aconitate hydratase, mitochondrial (780 aa).

A mitochondrion-targeting transit peptide spans 1–27 (MAPYSLLVSRLQKALGARQYHVASVLC). Lys31 is subject to N6-succinyllysine. Residue Lys50 is modified to N6-acetyllysine; alternate. Position 50 is an N6-succinyllysine; alternate (Lys50). Gln99 serves as a coordination point for substrate. Lys138 and Lys144 each carry N6-acetyllysine; alternate. Lys138 and Lys144 each carry N6-succinyllysine; alternate. 192–194 (DSH) provides a ligand contact to substrate. Lys233 is subject to N6-acetyllysine; alternate. Residue Lys233 is modified to N6-succinyllysine; alternate. Cys385 is a binding site for [4Fe-4S] cluster. Lys411 carries the post-translational modification N6-succinyllysine. [4Fe-4S] cluster is bound by residues Cys448 and Cys451. 2 residues coordinate substrate: Arg474 and Arg479. N6-acetyllysine; alternate is present on residues Lys517 and Lys523. N6-succinyllysine; alternate is present on residues Lys517 and Lys523. Basic and acidic residues predominate over residues 524–537 (LEAPDADELPRAEF). The interval 524–560 (LEAPDADELPRAEFDPGQDTYQHPPKDSSGQQVDVSP) is disordered. Lys549 is modified (N6-succinyllysine). Residues 551–560 (SSGQQVDVSP) show a composition bias toward polar residues. The residue at position 559 (Ser559) is a Phosphoserine. Lys573 carries the N6-acetyllysine; alternate modification. Residue Lys573 is modified to N6-succinyllysine; alternate. Position 591 is an N6-succinyllysine (Lys591). Lys605 bears the N6-acetyllysine; alternate mark. Lys605 is subject to N6-succinyllysine; alternate. Substrate is bound at residue Arg607. Lys628 is modified (N6-succinyllysine). Ser670 carries the phosphoserine modification. 670–671 (SR) contributes to the substrate binding site. Lys689 carries the post-translational modification N6-succinyllysine. 2 positions are modified to N6-acetyllysine; alternate: Lys723 and Lys730. An N6-succinyllysine; alternate mark is found at Lys723 and Lys730. Lys736 and Lys743 each carry N6-acetyllysine.

It belongs to the aconitase/IPM isomerase family. As to quaternary structure, monomer. It depends on [4Fe-4S] cluster as a cofactor. Forms covalent cross-links mediated by transglutaminase TGM2, between a glutamine and the epsilon-amino group of a lysine residue, forming homopolymers and heteropolymers.

It localises to the mitochondrion. It catalyses the reaction citrate = D-threo-isocitrate. It functions in the pathway carbohydrate metabolism; tricarboxylic acid cycle; isocitrate from oxaloacetate: step 2/2. Catalyzes the isomerization of citrate to isocitrate via cis-aconitate. The protein is Aconitate hydratase, mitochondrial (ACO2) of Bos taurus (Bovine).